The chain runs to 221 residues: Guanylate kinase (221 aa).

The 180-residue stretch at 20 to 199 folds into the Guanylate kinase-like domain; the sequence is GLMFILSSPS…CFGKVREILA (180 aa). ATP is bound at residue 27-34; the sequence is SPSGAGKT.

This sequence belongs to the guanylate kinase family.

It localises to the cytoplasm. The catalysed reaction is GMP + ATP = GDP + ADP. Its function is as follows. Essential for recycling GMP and indirectly, cGMP. This Novosphingobium aromaticivorans (strain ATCC 700278 / DSM 12444 / CCUG 56034 / CIP 105152 / NBRC 16084 / F199) protein is Guanylate kinase.